We begin with the raw amino-acid sequence, 146 residues long: Probable transporter XF_0765 (146 aa).

Helical transmembrane passes span 9-29, 46-66, 91-111, and 116-136; these read FTVA…SEMI, NPSL…GMAL, IVFG…CPGP, and LSTG…GMII.

Belongs to the TsuA/YedE (TC 9.B.102) family.

Its subcellular location is the cell inner membrane. This chain is Probable transporter XF_0765, found in Xylella fastidiosa (strain 9a5c).